We begin with the raw amino-acid sequence, 302 residues long: Putative peptide permease protein BOV_A0350 (302 aa).

A disordered region spans residues 1–22; it reads MRSSIHASRLRKMGQSIPASTG. 6 consecutive transmembrane segments (helical) span residues 38–58, 101–121, 147–167, 200–222, 230–250, and 268–288; these read IFGLVLLTPLLFAVLTYPLWL, LLVAVSSVVLSTAIGFLIGAI, IFLLVLASIIGSGIWSTVVVI, AGLGHLLFRHGLPNSIDILVVYA, ILLEAGLSFLGLGVPPPAASW, and WQWLFPGGALVLAVLAINFIG. One can recognise an ABC transmembrane type-1 domain in the interval 97–288; the sequence is GRISLLVAVS…LAVLAINFIG (192 aa).

The protein belongs to the binding-protein-dependent transport system permease family. As to quaternary structure, the complex is composed of two ATP-binding proteins (BOV_A0347 and BOV_A0348), two transmembrane proteins (BOV_A0350 and BOV_A0351) and a solute-binding protein (BOV_A0352).

The protein resides in the cell inner membrane. Probably part of an ABC transporter complex that could be involved in peptide import. Probably responsible for the translocation of the substrate across the membrane. This chain is Putative peptide permease protein BOV_A0350, found in Brucella ovis (strain ATCC 25840 / 63/290 / NCTC 10512).